Consider the following 280-residue polypeptide: Polyamine aminopropyltransferase 2 (280 aa).

The 236-residue stretch at 2 to 237 (ELWLDEALEL…GIIGFTYCSK (236 aa)) folds into the PABS domain. S-methyl-5'-thioadenosine is bound at residue Gln33. Spermidine-binding residues include His64 and Asp88. Residues Glu108 and 139-140 (DG) each bind S-methyl-5'-thioadenosine. Asp157 functions as the Proton acceptor in the catalytic mechanism. Residue 157–160 (DSSD) participates in spermidine binding. Pro164 provides a ligand contact to S-methyl-5'-thioadenosine.

The protein belongs to the spermidine/spermine synthase family. In terms of assembly, homodimer or homotetramer.

Its subcellular location is the cytoplasm. The enzyme catalyses S-adenosyl 3-(methylsulfanyl)propylamine + putrescine = S-methyl-5'-thioadenosine + spermidine + H(+). It functions in the pathway amine and polyamine biosynthesis; spermidine biosynthesis; spermidine from putrescine: step 1/1. In terms of biological role, catalyzes the irreversible transfer of a propylamine group from the amino donor S-adenosylmethioninamine (decarboxy-AdoMet) to putrescine (1,4-diaminobutane) to yield spermidine. The protein is Polyamine aminopropyltransferase 2 of Leptospira interrogans serogroup Icterohaemorrhagiae serovar Lai (strain 56601).